The following is a 181-amino-acid chain: Transcription termination/antitermination protein NusG (181 aa).

A KOW domain is found at 130-158 (PGETVRVNDGPFSDFNGIVEEVDYEKNRL).

The protein belongs to the NusG family. In terms of assembly, monomer. Interacts with the transcription termination factor Rho and with RNA polymerase.

Functionally, participates in transcription elongation, termination and antitermination. In the absence of Rho, increases the rate of transcription elongation by the RNA polymerase (RNAP), probably by partially suppressing pausing. In the presence of Rho, modulates most Rho-dependent termination events by interacting with the RNAP to render the complex more susceptible to the termination activity of Rho. May be required to overcome a kinetic limitation of Rho to function at certain terminators. Also involved in ribosomal RNA transcriptional antitermination. This chain is Transcription termination/antitermination protein NusG, found in Buchnera aphidicola subsp. Baizongia pistaciae (strain Bp).